The following is a 107-amino-acid chain: NADH-quinone oxidoreductase subunit K (107 aa).

3 helical membrane passes run 9–29 (IGVN…MFAV), 36–56 (IVIL…FLTF), and 68–88 (FSLF…AIVI).

Belongs to the complex I subunit 4L family. NDH-1 is composed of 14 different subunits. Subunits NuoA, H, J, K, L, M, N constitute the membrane sector of the complex.

Its subcellular location is the cell inner membrane. It catalyses the reaction a quinone + NADH + 5 H(+)(in) = a quinol + NAD(+) + 4 H(+)(out). NDH-1 shuttles electrons from NADH, via FMN and iron-sulfur (Fe-S) centers, to quinones in the respiratory chain. The immediate electron acceptor for the enzyme in this species is believed to be a menaquinone. Couples the redox reaction to proton translocation (for every two electrons transferred, four hydrogen ions are translocated across the cytoplasmic membrane), and thus conserves the redox energy in a proton gradient. In Chlorobaculum tepidum (strain ATCC 49652 / DSM 12025 / NBRC 103806 / TLS) (Chlorobium tepidum), this protein is NADH-quinone oxidoreductase subunit K.